Here is a 311-residue protein sequence, read N- to C-terminus: Small ribosomal subunit biogenesis GTPase RsgA (311 aa).

The region spanning 88–246 (SKEKEQVIVA…VIDTPGIREF (159 aa)) is the CP-type G domain. GTP contacts are provided by residues 137 to 140 (NKID) and 188 to 196 (GHSGVGKST). Zn(2+) is bound by residues Cys270, Cys275, His277, and Cys283.

Belongs to the TRAFAC class YlqF/YawG GTPase family. RsgA subfamily. Monomer. Associates with 30S ribosomal subunit, binds 16S rRNA. It depends on Zn(2+) as a cofactor.

The protein localises to the cytoplasm. Its function is as follows. One of several proteins that assist in the late maturation steps of the functional core of the 30S ribosomal subunit. Helps release RbfA from mature subunits. May play a role in the assembly of ribosomal proteins into the subunit. Circularly permuted GTPase that catalyzes slow GTP hydrolysis, GTPase activity is stimulated by the 30S ribosomal subunit. The chain is Small ribosomal subunit biogenesis GTPase RsgA from Chlorobaculum tepidum (strain ATCC 49652 / DSM 12025 / NBRC 103806 / TLS) (Chlorobium tepidum).